Reading from the N-terminus, the 436-residue chain is MKGFMIAAPASGSGKTTVTLGLLRALKRRGEVLAPVKAGPDYIDPAYHRAASGVDCFNLDPWAMRPELISALSSRMTESGARVLVAEGMMGLFDGAIDGKGSSADLARLLDLPVVLVVDCARQSHSIAALVWGFSQFRKDVLIEGVILNRVGSPRHEAMLRGALAPLGVPVLGALPRDPALSLPERHLGLVQADEHAGLESFLEQAADVMEAHIDMDALQTIWLRPKRYDAMANVARLKPLGNRIAVARDDAFAFAYMHLFEGWRRRGAEISFFSPLADEAPKADADAIYLPGGYPELHAQRLAGAPRFRTAIGDAAARGVTAYGECGGYMVLGKTLEDAAGVHHPMLGLLPLETSFARRKLHLGYRLLEPLGGLPWDMPLKAHEFHYASIVREEKADRLFRVRDASGENLGEAGLRVGSVSGSFMHVIDFSGEAA.

The region spanning 244 to 435 is the GATase cobBQ-type domain; it reads RIAVARDDAF…MHVIDFSGEA (192 aa). Residue Cys327 is the Nucleophile of the active site.

It belongs to the CobB/CbiA family. The cofactor is Mg(2+).

It catalyses the reaction hydrogenobyrinate + 2 L-glutamine + 2 ATP + 2 H2O = hydrogenobyrinate a,c-diamide + 2 L-glutamate + 2 ADP + 2 phosphate + 2 H(+). Its pathway is cofactor biosynthesis; adenosylcobalamin biosynthesis; cob(II)yrinate a,c-diamide from precorrin-2 (aerobic route): step 9/10. In terms of biological role, catalyzes the ATP-dependent amidation of the two carboxylate groups at positions a and c of hydrogenobyrinate, using either L-glutamine or ammonia as the nitrogen source. This Brucella ovis (strain ATCC 25840 / 63/290 / NCTC 10512) protein is Hydrogenobyrinate a,c-diamide synthase.